Reading from the N-terminus, the 175-residue chain is MPLVEKRYAQALLELSGSDINSIKEEFGDFTNLYNSDKDFRDFLNNPVVKTDKKQALIRSVFTDRLSKNMLNMILLLVSKHRTAEIPGIFNQFIQMANETANVLDMKIIMAAPMDEVQLETLREKFKKKYNAVAVNSTEIVDESLIGGLKVIIGDKVYDGSVKGRIESLTEIVSV.

The protein belongs to the ATPase delta chain family. F-type ATPases have 2 components, F(1) - the catalytic core - and F(0) - the membrane proton channel. F(1) has five subunits: alpha(3), beta(3), gamma(1), delta(1), epsilon(1). F(0) has three main subunits: a(1), b(2) and c(10-14). The alpha and beta chains form an alternating ring which encloses part of the gamma chain. F(1) is attached to F(0) by a central stalk formed by the gamma and epsilon chains, while a peripheral stalk is formed by the delta and b chains.

The protein resides in the cell membrane. In terms of biological role, f(1)F(0) ATP synthase produces ATP from ADP in the presence of a proton or sodium gradient. F-type ATPases consist of two structural domains, F(1) containing the extramembraneous catalytic core and F(0) containing the membrane proton channel, linked together by a central stalk and a peripheral stalk. During catalysis, ATP synthesis in the catalytic domain of F(1) is coupled via a rotary mechanism of the central stalk subunits to proton translocation. Its function is as follows. This protein is part of the stalk that links CF(0) to CF(1). It either transmits conformational changes from CF(0) to CF(1) or is implicated in proton conduction. The polypeptide is ATP synthase subunit delta (Ruminiclostridium cellulolyticum (strain ATCC 35319 / DSM 5812 / JCM 6584 / H10) (Clostridium cellulolyticum)).